We begin with the raw amino-acid sequence, 149 residues long: Sec-independent protein translocase protein TatB (149 aa).

A helical membrane pass occupies residues 1–21; sequence MFDIGFTELIVIGIVALVVVG. Residues 92-149 form a disordered region; that stretch reads VDMLDKSVRNEPQNAQTPPQTADAEPAQPDVRQQTLPLEEPDQNRAAGEPSSTSTRPA. Over residues 101–111 the composition is skewed to polar residues; that stretch reads NEPQNAQTPPQ.

Belongs to the TatB family. The Tat system comprises two distinct complexes: a TatABC complex, containing multiple copies of TatA, TatB and TatC subunits, and a separate TatA complex, containing only TatA subunits. Substrates initially bind to the TatABC complex, which probably triggers association of the separate TatA complex to form the active translocon.

It localises to the cell inner membrane. In terms of biological role, part of the twin-arginine translocation (Tat) system that transports large folded proteins containing a characteristic twin-arginine motif in their signal peptide across membranes. Together with TatC, TatB is part of a receptor directly interacting with Tat signal peptides. TatB may form an oligomeric binding site that transiently accommodates folded Tat precursor proteins before their translocation. The sequence is that of Sec-independent protein translocase protein TatB from Thiobacillus denitrificans (strain ATCC 25259 / T1).